The following is a 162-amino-acid chain: Caveolin-2 (162 aa).

Residues 1 to 86 (MGLETEKADA…FEVSKYLIYK (86 aa)) lie on the Cytoplasmic side of the membrane. Tyr-19 carries the post-translational modification Phosphotyrosine; by SRC. The segment at 19-40 (YSRHSGLGYPEPEKCAKSTQDR) is disordered. Ser-20 and Ser-23 each carry phosphoserine. Phosphotyrosine; by SRC is present on Tyr-27. The span at 29–40 (EPEKCAKSTQDR) shows a compositional bias: basic and acidic residues. Ser-36 is modified (phosphoserine). The segment at residues 87 to 107 (VLTVLLAIPLAFVAGILFATL) is an intramembrane region (helical). Residues 108–162 (SCLHIWIVVPFVKTCLMVLPSVQTVWHSITDGFIAPLYKSMGLIFSSISLRLSPE) lie on the Cytoplasmic side of the membrane.

It belongs to the caveolin family. Monomer or homodimer. Interacts with CAV1; the interaction forms a stable heterooligomeric complex that is required for targeting to lipid rafts and for caveolae formation. Tyrosine phosphorylated forms do not form heterooligomers with the Tyr-19-phosphorylated form existing as a monomer or dimer, and the Tyr-27-form as a monomer only. Interacts (tyrosine phosphorylated form) with the SH2 domain-containing proteins, RASA1, NCK1 and SRC. Interacts (tyrosine phosphorylated form) with INSR, the interaction (Tyr-27-phosphorylated form) is increased on insulin stimulation. Interacts (Tyr-19 phosphorylated form) with MAPK1 (phosphorylated form); the interaction, promoted by insulin, leads to nuclear location and MAPK1 activation. Interacts with STAT3; the interaction is increased on insulin-induced tyrosine phosphorylation leading to STAT activation. In terms of processing, phosphorylated on serine and tyrosine residues. CAV1 promotes phosphorylation on Ser-23 which then targets the complex to the plasma membrane, lipid rafts and caveolae. Phosphorylation on Ser-36 appears to modulate mitosis in endothelial cells. Phosphorylation on both Tyr-19 and Tyr-27 is required for insulin-induced 'Ser-727' phosphorylation of STAT3 and its activation. Phosphorylation on Tyr-19 is required for insulin-induced phosphorylation of MAPK1 and DNA binding of STAT3. Tyrosine phosphorylation is induced by both EGF and insulin (By. similarity).

It localises to the nucleus. Its subcellular location is the cytoplasm. The protein resides in the golgi apparatus membrane. The protein localises to the cell membrane. It is found in the membrane. It localises to the caveola. Its function is as follows. May act as a scaffolding protein within caveolar membranes. Interacts directly with G-protein alpha subunits and can functionally regulate their activity. Acts as an accessory protein in conjunction with CAV1 in targeting to lipid rafts and driving caveolae formation. The Ser-36 phosphorylated form has a role in modulating mitosis in endothelial cells. Positive regulator of cellular mitogenesis of the MAPK signaling pathway. Required for the insulin-stimulated nuclear translocation and activation of MAPK1 and STAT3, and the subsequent regulation of cell cycle progression. In Didelphis virginiana (North American opossum), this protein is Caveolin-2 (CAV2).